The chain runs to 63 residues: Large ribosomal subunit protein uL29 (63 aa).

It belongs to the universal ribosomal protein uL29 family.

The sequence is that of Large ribosomal subunit protein uL29 from Vibrio parahaemolyticus serotype O3:K6 (strain RIMD 2210633).